Here is a 265-residue protein sequence, read N- to C-terminus: DNA repair protein RecO (265 aa).

This sequence belongs to the RecO family.

Involved in DNA repair and RecF pathway recombination. This Mycobacterium ulcerans (strain Agy99) protein is DNA repair protein RecO.